A 57-amino-acid polypeptide reads, in one-letter code: Conotoxin Cal6.39 (57 aa).

Positions 1–18 are cleaved as a signal peptide; sequence MSGTTVLLLTCLFLVTMA. Cystine bridges form between Cys22–Cys36, Cys29–Cys46, and Cys35–Cys52.

As to expression, expressed by the venom duct.

It localises to the secreted. Functionally, probable neurotoxin. The protein is Conotoxin Cal6.39 of Californiconus californicus (California cone).